Reading from the N-terminus, the 160-residue chain is Cytochrome b6-f complex subunit 4 (160 aa).

Helical transmembrane passes span 36 to 56 (LLYT…GLAV), 95 to 115 (LLGV…PFIE), and 131 to 151 (TVFL…TLPI).

This sequence belongs to the cytochrome b family. PetD subfamily. In terms of assembly, the 4 large subunits of the cytochrome b6-f complex are cytochrome b6, subunit IV (17 kDa polypeptide, petD), cytochrome f and the Rieske protein, while the 4 small subunits are petG, petL, petM and petN. The complex functions as a dimer.

The protein localises to the plastid. Its subcellular location is the chloroplast thylakoid membrane. In terms of biological role, component of the cytochrome b6-f complex, which mediates electron transfer between photosystem II (PSII) and photosystem I (PSI), cyclic electron flow around PSI, and state transitions. This is Cytochrome b6-f complex subunit 4 from Mesostigma viride (Green alga).